The following is a 141-amino-acid chain: Large ribosomal subunit protein uL11 (141 aa).

Belongs to the universal ribosomal protein uL11 family. In terms of assembly, part of the ribosomal stalk of the 50S ribosomal subunit. Interacts with L10 and the large rRNA to form the base of the stalk. L10 forms an elongated spine to which L12 dimers bind in a sequential fashion forming a multimeric L10(L12)X complex. Post-translationally, one or more lysine residues are methylated.

In terms of biological role, forms part of the ribosomal stalk which helps the ribosome interact with GTP-bound translation factors. This is Large ribosomal subunit protein uL11 from Chloroflexus aggregans (strain MD-66 / DSM 9485).